Reading from the N-terminus, the 147-residue chain is Ponticulin-like protein C1 (147 aa).

The N-terminal stretch at 1-20 (MKFTKSLLLLIVAVFASSNA) is a signal peptide. N118 is lipidated: GPI-like-anchor amidated asparagine. N118 carries N-linked (GlcNAc...) asparagine glycosylation. Positions 119 to 147 (SSESDSSDSTRIGASFALAASVLLSMLAI) are cleaved as a propeptide — removed in mature form.

It belongs to the ponticulin family. The GPI-like-anchor contains a phosphoceramide group, rather than a phosphatidyl group.

The protein resides in the cell membrane. This Dictyostelium discoideum (Social amoeba) protein is Ponticulin-like protein C1 (ponC1).